We begin with the raw amino-acid sequence, 94 residues long: DNA-directed RNA polymerase subunit Rpo11 (94 aa).

Belongs to the archaeal Rpo11/eukaryotic RPB11/RPC19 RNA polymerase subunit family. As to quaternary structure, part of the RNA polymerase complex.

It is found in the cytoplasm. The enzyme catalyses RNA(n) + a ribonucleoside 5'-triphosphate = RNA(n+1) + diphosphate. Functionally, DNA-dependent RNA polymerase (RNAP) catalyzes the transcription of DNA into RNA using the four ribonucleoside triphosphates as substrates. The sequence is that of DNA-directed RNA polymerase subunit Rpo11 from Haloarcula marismortui (strain ATCC 43049 / DSM 3752 / JCM 8966 / VKM B-1809) (Halobacterium marismortui).